Reading from the N-terminus, the 286-residue chain is ATP synthase gamma chain (286 aa).

It belongs to the ATPase gamma chain family. In terms of assembly, F-type ATPases have 2 components, CF(1) - the catalytic core - and CF(0) - the membrane proton channel. CF(1) has five subunits: alpha(3), beta(3), gamma(1), delta(1), epsilon(1). CF(0) has three main subunits: a, b and c.

The protein localises to the cell membrane. Produces ATP from ADP in the presence of a proton gradient across the membrane. The gamma chain is believed to be important in regulating ATPase activity and the flow of protons through the CF(0) complex. The sequence is that of ATP synthase gamma chain from Mycoplasma mobile (strain ATCC 43663 / 163K / NCTC 11711) (Mesomycoplasma mobile).